The sequence spans 388 residues: MNCLFLFMSKKPKSRGNMEKEKKNIRGREFLQKSAPELTTRKTTLSFNLPTPRSLPSPTSIKDLYTDREQNQNQNLRVFSFKELSDATCEFSRKLKIGEGGFGSVYKATINNPTVGDSHSSPLTVAVKKLNRQSLQGHKQWLAEVHFLGVVNHPNVVRLLGYCSEDRERLLVYELMSNRSLEDHLFTLRTLTLSWKQRLEIMLGAAQGLAYLHEIQVIYRDFKSSNVLLNEEFHPKLSDFGLAREGPEGDNTHVTTARVGTDGYAAPEYVITGHLKTHCDVYSFGVVLYEIITGRRTLERMKPLAEQKLLEWVKKYPINSKRFKMIVDSKLCNKYPIAMVRRVAKLADHCVNKIDKERPTMAFVVESLTNIIEESNSEDMGSSVGIRG.

Cys-3 carries S-palmitoyl cysteine lipidation. Positions 91–372 constitute a Protein kinase domain; the sequence is FSRKLKIGEG…FVVESLTNII (282 aa). Residues 97–105 and Lys-128 each bind ATP; that span reads IGEGGFGSV. Residue Asp-221 is the Proton acceptor of the active site.

It belongs to the protein kinase superfamily. Ser/Thr protein kinase family.

The protein localises to the cell membrane. The catalysed reaction is L-seryl-[protein] + ATP = O-phospho-L-seryl-[protein] + ADP + H(+). It carries out the reaction L-threonyl-[protein] + ATP = O-phospho-L-threonyl-[protein] + ADP + H(+). Functionally, may be involved in plant defense signaling. This chain is Probable serine/threonine-protein kinase PBL20, found in Arabidopsis thaliana (Mouse-ear cress).